We begin with the raw amino-acid sequence, 137 residues long: Large ribosomal subunit protein uL16 (137 aa).

The tract at residues 1-22 (MLQPKRTKFRKVQKGRNRGLAH) is disordered.

Belongs to the universal ribosomal protein uL16 family. Part of the 50S ribosomal subunit.

Its function is as follows. Binds 23S rRNA and is also seen to make contacts with the A and possibly P site tRNAs. This chain is Large ribosomal subunit protein uL16, found in Chromohalobacter salexigens (strain ATCC BAA-138 / DSM 3043 / CIP 106854 / NCIMB 13768 / 1H11).